The following is a 281-amino-acid chain: Probable feruloyl esterase A (281 aa).

The first 21 residues, 1 to 21, serve as a signal peptide directing secretion; that stretch reads MKQFSAKYALILLATAGQALA. Disulfide bonds link cysteine 50–cysteine 279, cysteine 112–cysteine 115, and cysteine 248–cysteine 255. Substrate is bound at residue aspartate 98. Asparagine 100 is a glycosylation site (N-linked (GlcNAc...) asparagine). Residue tyrosine 101 coordinates substrate. The Nucleophile role is filled by serine 154. Aspartate 215 functions as the Charge relay system in the catalytic mechanism. Histidine 268 provides a ligand contact to substrate. Catalysis depends on histidine 268, which acts as the Charge relay system.

Belongs to the AB hydrolase superfamily. FaeA family.

It is found in the secreted. It carries out the reaction feruloyl-polysaccharide + H2O = ferulate + polysaccharide.. In terms of biological role, involved in degradation of plant cell walls. Hydrolyzes the feruloyl-arabinose ester bond in arabinoxylans, and the feruloyl-galactose ester bond in pectin. This chain is Probable feruloyl esterase A (faeA), found in Aspergillus niger (strain ATCC MYA-4892 / CBS 513.88 / FGSC A1513).